Reading from the N-terminus, the 208-residue chain is Large ribosomal subunit protein uL4 (208 aa).

The interval 44–76 (RRQGTQSTKTKSEVRGGGRKPWRQKGTGRARHG) is disordered. Basic residues predominate over residues 60–76 (GGRKPWRQKGTGRARHG).

Belongs to the universal ribosomal protein uL4 family. Part of the 50S ribosomal subunit.

Functionally, one of the primary rRNA binding proteins, this protein initially binds near the 5'-end of the 23S rRNA. It is important during the early stages of 50S assembly. It makes multiple contacts with different domains of the 23S rRNA in the assembled 50S subunit and ribosome. In terms of biological role, forms part of the polypeptide exit tunnel. This Acetivibrio thermocellus (strain ATCC 27405 / DSM 1237 / JCM 9322 / NBRC 103400 / NCIMB 10682 / NRRL B-4536 / VPI 7372) (Clostridium thermocellum) protein is Large ribosomal subunit protein uL4.